The sequence spans 653 residues: Splicing factor 1 (653 aa).

2 disordered regions span residues 1-44 and 65-94; these read MATG…PPGL and LRTG…GKRL. A2 carries the post-translational modification N-acetylalanine. S14 carries the post-translational modification Phosphoserine. The Nuclear localization signal signature appears at 15–19; that stretch reads KKRKR. S20 is modified (phosphoserine; by PKG). Residues S80 and S82 each carry the phosphoserine modification. Y87 is modified (phosphotyrosine). Phosphoserine is present on S89. The KH domain occupies 141-222; the sequence is MIPQDEYPEI…ENVKKAVEQI (82 aa). The segment at 277–296 adopts a CCHC-type zinc-finger fold; that stretch reads TVCTKCGGAGHIASDCKFQR. 2 disordered regions span residues 325–584 and 611–653; these read VPAS…APPP and RIPP…GKAA. Residues 335–350 are compositionally biased toward low complexity; that stretch reads PATTPLASAPRPAAPA. A compositionally biased stretch (gly residues) spans 382–394; that stretch reads MHGGGPGGPGGGP. 2 stretches are compositionally biased toward pro residues: residues 418 to 447 and 470 to 499; these read NGPP…PPPM and MPPP…PLPP. The segment covering 515–534 has biased composition (low complexity); it reads SSMASSTPLPWQQNTTTTTT. The span at 567–584 shows a compositional bias: pro residues; sequence VPLPPGVQPPLPPGAPPP.

It belongs to the BBP/SF1 family. In terms of assembly, binds U2AF2. Interacts with U1 snRNA. Interacts with RBM17. Binds EWSR1, FUS and TAF15. Post-translationally, phosphorylation on Ser-20 interferes with U2AF2 binding and spliceosome assembly. As to expression, detected at intermediate levels in spleen. Lower levels in heart, kidney, brain, liver, testis, bone marrow, adrenal gland, lymph nodes, pancreas and thymus.

Its subcellular location is the nucleus. Necessary for the ATP-dependent first step of spliceosome assembly. Binds to the intron branch point sequence (BPS) 5'-UACUAAC-3' of the pre-mRNA. May act as transcription repressor. In Mus musculus (Mouse), this protein is Splicing factor 1 (Sf1).